A 374-amino-acid chain; its full sequence is Queuine tRNA-ribosyltransferase (374 aa).

The Proton acceptor role is filled by aspartate 89. Substrate contacts are provided by residues 89-93 (DSGGF), aspartate 143, glutamine 187, and glycine 214. The segment at 245-251 (GVGKPED) is RNA binding. Aspartate 264 serves as the catalytic Nucleophile. Residues 269–273 (TRNAR) form an RNA binding; important for wobble base 34 recognition region. Zn(2+) contacts are provided by cysteine 302, cysteine 304, cysteine 307, and histidine 333.

This sequence belongs to the queuine tRNA-ribosyltransferase family. As to quaternary structure, homodimer. Within each dimer, one monomer is responsible for RNA recognition and catalysis, while the other monomer binds to the replacement base PreQ1. It depends on Zn(2+) as a cofactor.

It carries out the reaction 7-aminomethyl-7-carbaguanine + guanosine(34) in tRNA = 7-aminomethyl-7-carbaguanosine(34) in tRNA + guanine. The protein operates within tRNA modification; tRNA-queuosine biosynthesis. In terms of biological role, catalyzes the base-exchange of a guanine (G) residue with the queuine precursor 7-aminomethyl-7-deazaguanine (PreQ1) at position 34 (anticodon wobble position) in tRNAs with GU(N) anticodons (tRNA-Asp, -Asn, -His and -Tyr). Catalysis occurs through a double-displacement mechanism. The nucleophile active site attacks the C1' of nucleotide 34 to detach the guanine base from the RNA, forming a covalent enzyme-RNA intermediate. The proton acceptor active site deprotonates the incoming PreQ1, allowing a nucleophilic attack on the C1' of the ribose to form the product. After dissociation, two additional enzymatic reactions on the tRNA convert PreQ1 to queuine (Q), resulting in the hypermodified nucleoside queuosine (7-(((4,5-cis-dihydroxy-2-cyclopenten-1-yl)amino)methyl)-7-deazaguanosine). This is Queuine tRNA-ribosyltransferase from Shewanella sp. (strain W3-18-1).